Reading from the N-terminus, the 134-residue chain is Putative nickel-responsive regulator (134 aa).

Ni(2+)-binding residues include His78, His89, His91, and Cys97.

Belongs to the transcriptional regulatory CopG/NikR family. Ni(2+) serves as cofactor.

Transcriptional regulator. The polypeptide is Putative nickel-responsive regulator (Chlorobium phaeobacteroides (strain DSM 266 / SMG 266 / 2430)).